Consider the following 463-residue polypeptide: Nucleobindin-1 (463 aa).

Positions 1-26 (MPPSGPQGTLLLLPLLLLLLLRAVLA) are cleaved as a signal peptide. Phosphoserine is present on serine 86. Residue threonine 148 is modified to Phosphothreonine. A coiled-coil region spans residues 150-218 (EARDLELLIQ…QQRRHREHPK (69 aa)). The DNA-binding element occupies 172–218 (HHEEFKRYEMLKEHERRRYLESLGEEQRKEAERRLEEQQRRHREHPK). Over residues 193 to 210 (SLGEEQRKEAERRLEEQQ) the composition is skewed to basic and acidic residues. A disordered region spans residues 193–221 (SLGEEQRKEAERRLEEQQRRHREHPKVNV). The tract at residues 228 to 321 (LKEVWEELDG…VTLGEFLAST (94 aa)) is binds to GNAI2 and GNAI3. EF-hand domains lie at 240 to 275 (PNRF…ELEK) and 292 to 327 (ERLR…KEFG). Ca(2+) contacts are provided by aspartate 253, asparagine 255, aspartate 257, glutamate 264, aspartate 305, asparagine 307, aspartate 309, and glutamate 316. Positions 303-333 (NVDTNQDRLVTLGEFLASTQRKEFGDTGEGW) match the GBA motif. Residues 341-409 (AYTEEELRRF…KQQQQQQQQQ (69 aa)) are a coiled coil. The interval 368–463 (LSQETEALGR…LPEVEVPQHL (96 aa)) is disordered. The residue at position 369 (serine 369) is a Phosphoserine. Over residues 439-463 (DQKEVDTSEKKLLERLPEVEVPQHL) the composition is skewed to basic and acidic residues.

This sequence belongs to the nucleobindin family. Interacts (via GBA motif) with guanine nucleotide-binding protein G(i) alpha subunits GNAI1, GNAI2 and GNAI3 with higher affinity for GNAI1 and GNAI3 than for GNAI2. Preferentially interacts with inactive rather than active GNAI3. Interaction with GNAI3 is inhibited when NUCB1 binds calcium, probably due to a conformational change which renders the GBA motif inaccessible.

The protein resides in the golgi apparatus. It is found in the cis-Golgi network membrane. It localises to the cytoplasm. Its subcellular location is the secreted. In terms of biological role, major calcium-binding protein of the Golgi which may have a role in calcium homeostasis. Acts as a non-receptor guanine nucleotide exchange factor which binds to and activates alpha subunits of guanine nucleotide-binding proteins (G proteins). The chain is Nucleobindin-1 (NUCB1) from Pongo abelii (Sumatran orangutan).